Here is a 158-residue protein sequence, read N- to C-terminus: ATP synthase subunit b', chloroplastic (158 aa).

The helical transmembrane segment at 25-45 (ATLPLMALQFIILTTILNFIF) threads the bilayer.

Belongs to the ATPase B chain family. In terms of assembly, F-type ATPases have 2 components, F(1) - the catalytic core - and F(0) - the membrane proton channel. F(1) has five subunits: alpha(3), beta(3), gamma(1), delta(1), epsilon(1). F(0) has four main subunits: a(1), b(1), b'(1) and c(10-14). The alpha and beta chains form an alternating ring which encloses part of the gamma chain. F(1) is attached to F(0) by a central stalk formed by the gamma and epsilon chains, while a peripheral stalk is formed by the delta, b and b' chains.

The protein localises to the plastid. It localises to the chloroplast thylakoid membrane. Functionally, f(1)F(0) ATP synthase produces ATP from ADP in the presence of a proton or sodium gradient. F-type ATPases consist of two structural domains, F(1) containing the extramembraneous catalytic core and F(0) containing the membrane proton channel, linked together by a central stalk and a peripheral stalk. During catalysis, ATP synthesis in the catalytic domain of F(1) is coupled via a rotary mechanism of the central stalk subunits to proton translocation. In terms of biological role, component of the F(0) channel, it forms part of the peripheral stalk, linking F(1) to F(0). The b'-subunit is a diverged and duplicated form of b found in plants and photosynthetic bacteria. The polypeptide is ATP synthase subunit b', chloroplastic (Gracilaria tenuistipitata var. liui (Red alga)).